A 511-amino-acid polypeptide reads, in one-letter code: GATOR complex protein NPRL3 (511 aa).

The tract at residues Lys37–Val58 is disordered.

Belongs to the NPR3 family. As to quaternary structure, probably part of the GATOR complex.

The protein resides in the lysosome membrane. Functionally, as a component of the GATOR complex may function in the amino acid-sensing branch of the TORC1 signaling pathway. The protein is GATOR complex protein NPRL3 (nprl-3) of Caenorhabditis elegans.